An 895-amino-acid chain; its full sequence is ABC-transporter-regulating transcription factor (895 aa).

Residues 69–96 constitute a DNA-binding region (zn(2)-C6 fungal-type); it reads CDMCRKKKIKCDGKMPKCSHCTNYKTDC. The interval 156–218 is disordered; sequence HASGSNTPHN…QKESETEVEG (63 aa). Polar residues predominate over residues 158-207; the sequence is SGSNTPHNPQKINIPSQSQIAMSQQNSSSHYSTPRLESQSSPRTAATSPE. Residues 648–668 traverse the membrane as a helical segment; the sequence is CVWLILYYPVSALVTLFANIL. Positions 726–813 are disordered; it reads ESYSKKKRKS…TGVSTNIPPN (88 aa). The span at 755-765 shows a compositional bias: low complexity; it reads PSTTQPTQAPS.

As to quaternary structure, interacts with ncaA.

It is found in the nucleus. It localises to the membrane. Transcription factor that regulates expression of the genes related to ergosterol biosynthesis, including erg3B, erg24A, erg25A, as well as cyp51A that encodes a target protein of azoles. In coordination with ffmA and ncaA, is responsible for the expression of the ABC transporter abcC/cdr1B/abcG1 related to azole resistance. Directly binds both the cyp51A and abcC/cdr1B/abcG1 promoters at a conserved 34 bp region called the atrR response element (ATRE). AtrR also binds to the promoter regions of both the sterol response transcription factor srbA and atrR genes themselves, the latter suggesting the possibility that atrR is autoregulated. Also regulates iron uptake, most likely via cooperation with SrbA. AtrR is necessary for hypoxia adaptation and virulence. The polypeptide is ABC-transporter-regulating transcription factor (Aspergillus fumigatus (strain ATCC MYA-4609 / CBS 101355 / FGSC A1100 / Af293) (Neosartorya fumigata)).